The primary structure comprises 80 residues: Large ribosomal subunit protein bL31B (80 aa).

Belongs to the bacterial ribosomal protein bL31 family. Type B subfamily. In terms of assembly, part of the 50S ribosomal subunit.

The protein is Large ribosomal subunit protein bL31B of Streptococcus mutans serotype c (strain ATCC 700610 / UA159).